A 154-amino-acid polypeptide reads, in one-letter code: uncharacterized protein (154 aa).

This is an uncharacterized protein from Aquifex aeolicus (strain VF5).